The primary structure comprises 76 residues: Putative defensin-like protein 184 (76 aa).

The N-terminal stretch at 1–21 is a signal peptide; the sequence is MKNSSILFVLIIVVFLISSSG. 4 cysteine pairs are disulfide-bonded: Cys32-Cys76, Cys38-Cys58, Cys44-Cys70, and Cys48-Cys72.

It belongs to the DEFL family.

It is found in the secreted. The polypeptide is Putative defensin-like protein 184 (LCR18) (Arabidopsis thaliana (Mouse-ear cress)).